We begin with the raw amino-acid sequence, 206 residues long: Enterobactin synthase component D (206 aa).

Mg(2+) contacts are provided by aspartate 107, glutamate 109, and glutamate 152.

The protein belongs to the P-Pant transferase superfamily. EntD family. As to quaternary structure, entB, EntD, EntE, and EntF form a multienzyme complex called enterobactin synthase. The cofactor is Mg(2+).

It localises to the membrane. It catalyses the reaction apo-[aryl-carrier protein] + CoA = holo-[aryl-carrier protein] + adenosine 3',5'-bisphosphate + H(+). The enzyme catalyses apo-[peptidyl-carrier protein] + CoA = holo-[peptidyl-carrier protein] + adenosine 3',5'-bisphosphate + H(+). Its pathway is siderophore biosynthesis; enterobactin biosynthesis. Functionally, involved in the biosynthesis of the siderophore enterobactin (enterochelin), which is a macrocyclic trimeric lactone of N-(2,3-dihydroxybenzoyl)-serine. The serine trilactone serves as a scaffolding for the three catechol functionalities that provide hexadentate coordination for the tightly ligated iron(2+) atoms. Plays an essential role in the assembly of the enterobactin by catalyzing the transfer of the 4'-phosphopantetheine (Ppant) moiety from coenzyme A to the apo-domains of both EntB (ArCP domain) and EntF (PCP domain) to yield their holo-forms which make them competent for the activation of 2,3-dihydroxybenzoate (DHB) and L-serine, respectively. The chain is Enterobactin synthase component D from Escherichia coli (strain K12).